The primary structure comprises 335 residues: Protein-arginine kinase (335 aa).

Positions 21–244 constitute a Phosphagen kinase C-terminal domain; sequence IVMSSRIRLA…NQIIHDEKQI (224 aa). Residues 24–28, H82, R115, 166–170, and 197–202 contribute to the ATP site; these read SSRIR, RASVM, and RGIYGE.

The protein belongs to the ATP:guanido phosphotransferase family.

It catalyses the reaction L-arginyl-[protein] + ATP = N(omega)-phospho-L-arginyl-[protein] + ADP + H(+). In terms of biological role, catalyzes the specific phosphorylation of arginine residues in proteins. This is Protein-arginine kinase from Staphylococcus aureus (strain Mu3 / ATCC 700698).